We begin with the raw amino-acid sequence, 156 residues long: Small ribosomal subunit protein uS7 (156 aa).

This sequence belongs to the universal ribosomal protein uS7 family. In terms of assembly, part of the 30S ribosomal subunit. Contacts proteins S9 and S11.

Its function is as follows. One of the primary rRNA binding proteins, it binds directly to 16S rRNA where it nucleates assembly of the head domain of the 30S subunit. Is located at the subunit interface close to the decoding center, probably blocks exit of the E-site tRNA. The sequence is that of Small ribosomal subunit protein uS7 from Polynucleobacter necessarius subsp. necessarius (strain STIR1).